A 362-amino-acid polypeptide reads, in one-letter code: Protein mab-21-like 3 (362 aa).

This sequence belongs to the mab-21 family.

This is Protein mab-21-like 3 (MAB21L3) from Homo sapiens (Human).